The sequence spans 120 residues: uncharacterized protein (120 aa).

A run of 4 helical transmembrane segments spans residues 9–29 (WPDFLSVVLLALLLWISLFCG), 32–52 (ALMFCCASVFSVALCVAADCL), 68–88 (FVWPLTWLGSLSGLGLAVMAT), and 94–114 (GPEHVIWALAGLLTFWLSFRF).

It is found in the membrane. This is an uncharacterized protein from Escherichia phage Mu (Bacteriophage Mu).